A 56-amino-acid chain; its full sequence is Large ribosomal subunit protein bL32 (56 aa).

Basic residues predominate over residues 1 to 20; that stretch reads MAVPKRRTSRSNTRSRRAQW. The tract at residues 1-26 is disordered; the sequence is MAVPKRRTSRSNTRSRRAQWKAKAPA.

Belongs to the bacterial ribosomal protein bL32 family.

This Parafrankia sp. (strain EAN1pec) protein is Large ribosomal subunit protein bL32.